The sequence spans 573 residues: MLRLPTVFRQMRPVSRVLAPHLTRAYAKDVKFGADARALMLQGVDLLADAVAVTMGPKGRTVIIEQSWGSPKVTKDGVTVAKSIDLKDKYKNIGAKLVQDVANNTNEEAGDGTTTATVLARSIAKEGFEKISKGANPVEIRRGVMLAVDAVIAELKKQSKPVTTPEEIAQVATISANGDKEIGNIISDAMKKVGRKGVITVKDGKTLNDELEIIEGMKFDRGYISPYFINTSKGQKCEFQDAYVLLSEKKISSIQSIVPALEIANAHRKPLVIIAEDVDGEALSTLVLNRLKVGLQVVAVKAPGFGDNRKNQLKDMAIATGGAVFGEEGLTLNLEDVQPHDLGKVGEVIVTKDDAMLLKGKGDKAQIEKRIQEIIEQLDVTTSEYEKEKLNERLAKLSDGVAVLKVGGTSDVEVNEKKDRVTDALNATRAAVEEGIVLGGGCALLRCIPALDSLTPANEDQKIGIEIIKRTLKIPAMTIAKNAGVEGSLIVEKIMQSSSEVGYDAMAGDFVNMVEKGIIDPTKVVRTALLDAAGVASLLTTAEVVVTEIPKEEKDPGMGAMGGMGGGMGGGMF.

Residues 1-26 (MLRLPTVFRQMRPVSRVLAPHLTRAY) constitute a mitochondrion transit peptide. Lys31 bears the N6-succinyllysine mark. A phosphoserine mark is found at Ser67 and Ser70. An ATP-binding site is contributed by Lys75. An N6-acetyllysine modification is found at Lys75. An N6-acetyllysine; alternate modification is found at Lys82. Position 82 is an N6-succinyllysine; alternate (Lys82). Lys87 carries the post-translational modification N6-acetyllysine. A Phosphotyrosine modification is found at Tyr90. Lys91 carries the N6-acetyllysine modification. ATP is bound at residue 111–115 (DGTTT). Lys125 is subject to N6-acetyllysine; alternate. An N6-succinyllysine; alternate modification is found at Lys125. N6-acetyllysine is present on Lys130. N6-acetyllysine; alternate is present on Lys133. Residue Lys133 is modified to N6-succinyllysine; alternate. Lys133 bears the N6-malonyllysine; alternate mark. Lys156 is subject to N6-acetyllysine. Lys191, Lys202, Lys205, Lys218, and Lys236 each carry N6-acetyllysine; alternate. N6-succinyllysine; alternate occurs at positions 191, 202, 205, 218, and 236. Lys249 is modified (N6-acetyllysine). Lys250 is modified (N6-acetyllysine; alternate). At Lys250 the chain carries N6-succinyllysine; alternate. Residues Lys269 and Lys292 each carry the N6-acetyllysine modification. Lys301 carries the post-translational modification N6-succinyllysine. Lys314 is modified (N6-acetyllysine). Lys352 is subject to N6-acetyllysine; alternate. Lys352 is modified (N6-succinyllysine; alternate). 2 positions are modified to N6-acetyllysine: Lys359 and Lys389. An N6-acetyllysine; alternate modification is found at Lys396. At Lys396 the chain carries N6-succinyllysine; alternate. A Phosphoserine modification is found at Ser410. ATP is bound at residue Gly440. At Lys469 the chain carries N6-acetyllysine. Lys481 carries the post-translational modification N6-acetyllysine; alternate. N6-succinyllysine; alternate is present on Lys481. Ser488 bears the Phosphoserine mark. Asp520 provides a ligand contact to ATP. Residue Lys551 forms a Glycyl lysine isopeptide (Lys-Gly) (interchain with G-Cter in SUMO2) linkage.

Belongs to the chaperonin (HSP60) family. Homoheptamer arranged in a ring structure. The functional units of these chaperonins consist of heptameric rings of the large subunit Hsp60, which function as a back-to-back double ring. Interacts with 2 heptameric Hsp10 rings to form the symmetrical football complex. Interacts with HRAS. Interacts with ATAD3A. Interacts with ETFBKMT and EEF1AKMT3. Interacts with MFHAS1. As to quaternary structure, (Microbial infection) Interacts with hepatitis B virus/HBV protein X. In terms of assembly, (Microbial infection) Interacts with HTLV-1 protein p40tax.

It localises to the mitochondrion matrix. It catalyses the reaction ATP + H2O + a folded polypeptide = ADP + phosphate + an unfolded polypeptide.. In terms of biological role, chaperonin implicated in mitochondrial protein import and macromolecular assembly. Together with Hsp10, facilitates the correct folding of imported proteins. May also prevent misfolding and promote the refolding and proper assembly of unfolded polypeptides generated under stress conditions in the mitochondrial matrix. The functional units of these chaperonins consist of heptameric rings of the large subunit Hsp60, which function as a back-to-back double ring. In a cyclic reaction, Hsp60 ring complexes bind one unfolded substrate protein per ring, followed by the binding of ATP and association with 2 heptameric rings of the co-chaperonin Hsp10. This leads to sequestration of the substrate protein in the inner cavity of Hsp60 where, for a certain period of time, it can fold undisturbed by other cell components. Synchronous hydrolysis of ATP in all Hsp60 subunits results in the dissociation of the chaperonin rings and the release of ADP and the folded substrate protein. The sequence is that of 60 kDa heat shock protein, mitochondrial (HSPD1) from Homo sapiens (Human).